A 200-amino-acid polypeptide reads, in one-letter code: Peptidyl-tRNA hydrolase (200 aa).

Tyrosine 14 serves as a coordination point for tRNA. Residue histidine 19 is the Proton acceptor of the active site. Residues phenylalanine 64, asparagine 66, and asparagine 112 each contribute to the tRNA site.

The protein belongs to the PTH family. Monomer.

The protein resides in the cytoplasm. The catalysed reaction is an N-acyl-L-alpha-aminoacyl-tRNA + H2O = an N-acyl-L-amino acid + a tRNA + H(+). Functionally, hydrolyzes ribosome-free peptidyl-tRNAs (with 1 or more amino acids incorporated), which drop off the ribosome during protein synthesis, or as a result of ribosome stalling. Catalyzes the release of premature peptidyl moieties from peptidyl-tRNA molecules trapped in stalled 50S ribosomal subunits, and thus maintains levels of free tRNAs and 50S ribosomes. The protein is Peptidyl-tRNA hydrolase of Maricaulis maris (strain MCS10) (Caulobacter maris).